Here is a 59-residue protein sequence, read N- to C-terminus: MKFLLFLSVALLLTSFIETVTVNKAGMERPSRALVGRGCPAECPDTCSSSGSCAPDFIG.

Positions 1-19 are cleaved as a signal peptide; it reads MKFLLFLSVALLLTSFIET. Residues 20–36 constitute a propeptide that is removed on maturation; that stretch reads VTVNKAGMERPSRALVG. Isoleucine 58 carries the isoleucine amide modification.

In terms of processing, contains 2 disulfide bonds. In terms of tissue distribution, expressed by the venom duct.

The protein resides in the secreted. This is Conotoxin Cl14.4 from Californiconus californicus (California cone).